The sequence spans 130 residues: UPF0212 protein TSIB_1358 (130 aa).

The protein belongs to the UPF0212 family.

The sequence is that of UPF0212 protein TSIB_1358 from Thermococcus sibiricus (strain DSM 12597 / MM 739).